Reading from the N-terminus, the 391-residue chain is Phosphoglycerate kinase (391 aa).

Substrate is bound by residues 21–23 (DLN), Arg-36, 59–62 (HRGR), Arg-113, and Arg-146. Residues Lys-197, Glu-314, and 340–343 (GGDT) each bind ATP.

It belongs to the phosphoglycerate kinase family. Monomer.

It localises to the cytoplasm. The catalysed reaction is (2R)-3-phosphoglycerate + ATP = (2R)-3-phospho-glyceroyl phosphate + ADP. The protein operates within carbohydrate degradation; glycolysis; pyruvate from D-glyceraldehyde 3-phosphate: step 2/5. The sequence is that of Phosphoglycerate kinase from Ruthia magnifica subsp. Calyptogena magnifica.